The primary structure comprises 512 residues: uncharacterized protein (512 aa).

The first 22 residues, Met1–Gly22, serve as a signal peptide directing secretion. Asn167 is a glycosylation site (N-linked (GlcNAc...) asparagine). Positions Ser251–Leu282 are disordered.

Its subcellular location is the secreted. This is an uncharacterized protein from Arthroderma benhamiae (strain ATCC MYA-4681 / CBS 112371) (Trichophyton mentagrophytes).